Consider the following 110-residue polypeptide: DNA-directed RNA polymerase subunit omega (110 aa).

It belongs to the RNA polymerase subunit omega family. The RNAP catalytic core consists of 2 alpha, 1 beta, 1 beta' and 1 omega subunit. When a sigma factor is associated with the core the holoenzyme is formed, which can initiate transcription.

The enzyme catalyses RNA(n) + a ribonucleoside 5'-triphosphate = RNA(n+1) + diphosphate. Promotes RNA polymerase assembly. Latches the N- and C-terminal regions of the beta' subunit thereby facilitating its interaction with the beta and alpha subunits. This is DNA-directed RNA polymerase subunit omega from Mycobacterium leprae (strain Br4923).